Reading from the N-terminus, the 1039-residue chain is Integrin alpha-IIb (1039 aa).

Residues 1–31 (MARALCPLQALWLLEWVLLLLGPCAAPPAWA) form the signal peptide. Residues 32–993 (LNLDPVQLTF…TQLLRALEER (962 aa)) lie on the Extracellular side of the membrane. 7 FG-GAP repeats span residues 35–96 (DPVQ…GGQC), 110–173 (VGSQ…RRAE), 187–238 (VEND…FSSY), 251–305 (SLSF…DSYY), 306–371 (QRLH…PHAL), 373–432 (APSL…GLRS), and 435–496 (SQVL…VQDS). The N-linked (GlcNAc...) asparagine glycan is linked to Asn-46. Intrachain disulfides connect Cys-87-Cys-96, Cys-138-Cys-161, and Cys-177-Cys-198. Ca(2+) is bound by residues Glu-274, Asp-276, and Asp-278. Asn-280 is a glycosylation site (N-linked (GlcNAc...) asparagine). Ca(2+)-binding residues include Thr-281, Glu-283, Asp-328, Asn-330, Asp-332, Arg-334, Asp-336, Asp-396, Asp-398, Asp-400, Tyr-402, Asp-404, Asp-457, Asp-459, Asn-461, Tyr-463, and Asp-465. Cystine bridges form between Cys-504/Cys-515 and Cys-521/Cys-576. A glycan (N-linked (GlcNAc...) asparagine) is linked at Asn-601. Disulfide bonds link Cys-633–Cys-639, Cys-705–Cys-718, Cys-857–Cys-921, and Cys-911–Cys-916. Asn-711 is a glycosylation site (N-linked (GlcNAc...) asparagine). Ile-874 carries an O-linked (GalNAc...) serine; in variant S-874 glycan. Ser-878 carries an O-linked (GalNAc...) serine glycan. Gln-891 bears the Pyrrolidone carboxylic acid; in light chain form 1 mark. The N-linked (GlcNAc...) asparagine glycan is linked to Asn-962. The helical transmembrane segment at 994-1019 (AIPIWWVLVGVLGGLLLLTILVLAMW) threads the bilayer. The Cytoplasmic portion of the chain corresponds to 1020-1039 (KVGFFKRNRPPLEEDDEEGE). Residues 1022 to 1026 (GFFKR) carry the GFFKR motif motif.

This sequence belongs to the integrin alpha chain family. Heterodimer of an alpha and a beta subunit. The alpha subunit is composed of a heavy and a light chain linked by a disulfide bond. Alpha-IIb associates with beta-3. Directly interacts with RNF181. Interacts (via C-terminus cytoplasmic tail region) with CIB1; the interaction is direct and calcium-dependent. Interacts (via C-terminus cytoplasmic tail region) with CIB2, CIB3 and CIB4; the interactions are stabilized/increased in a calcium and magnesium-dependent manner. ITGA2B:ITGB3 interacts with PPIA/CYPA; the interaction is ROS and PPIase activity-dependent and is increased in the presence of thrombin. ITGA2B:ITGB3 interacts with SELP (via C-type lectin domain); the interaction mediates cell-cell interaction and adhesion. Cleaved by ELANE; the cleavage promotes activation of platelet fibrinogen receptor integrin alpha-IIb/beta-3. In terms of tissue distribution, isoform 1 and isoform 2 are expressed in platelets and megakaryocytes, but not in reticulocytes. Not detected in Jurkat, nor in U937 cell lines. Isoform 3 is expressed in prostate adenocarcinoma, as well as in several erythroleukemia, prostate adenocarcinoma and melanoma cell lines, including PC-3, DU-145, HEL, WM983A, WM983B and WM35. Not detected in platelets, nor in normal prostate (at protein level).

It localises to the membrane. Integrin alpha-IIb/beta-3 is a receptor for fibronectin, fibrinogen, plasminogen, prothrombin, thrombospondin and vitronectin. It recognizes the sequence R-G-D in a wide array of ligands. It recognizes the sequence H-H-L-G-G-G-A-K-Q-A-G-D-V in fibrinogen gamma chain. Following activation integrin alpha-IIb/beta-3 brings about platelet/platelet interaction through binding of soluble fibrinogen. This step leads to rapid platelet aggregation which physically plugs ruptured endothelial cell surface. The protein is Integrin alpha-IIb (ITGA2B) of Homo sapiens (Human).